A 497-amino-acid chain; its full sequence is Cytochrome P450 98A8 (497 aa).

The chain crosses the membrane as a helical span at residues 2 to 19 (IIYLISLLPIIVATLMLY). Residue cysteine 431 coordinates heme.

This sequence belongs to the cytochrome P450 family. It depends on heme as a cofactor. As to expression, strongly expressed in inflorescence tips, young flower buds, seeds, stamen, tapetum and pollen.

Its subcellular location is the membrane. In terms of biological role, acts redundantly with CYP98A9 as tricoumaroylspermidine meta-hydroxylase. Also catalyzes the meta-hydroxylation of the three triferuloylspermidine phenolic rings. Unable to use 5-O-(4-coumaroyl) D-quinate or 5-O-(4-coumaroyl) shikimate as substrates. This is Cytochrome P450 98A8 (CYP98A8) from Arabidopsis thaliana (Mouse-ear cress).